Here is a 119-residue protein sequence, read N- to C-terminus: Probable non-functional T cell receptor gamma variable 11 (119 aa).

A signal peptide spans 1–18 (MPLVVAVIFFSLWVFALG). The Ig-like domain maps to 23 to 119 (PEISISRPAN…VYHCACWIRH (97 aa)). A glycan (N-linked (GlcNAc...) asparagine) is linked at Asn-32.

Most probably, the gamma-delta TR is not assembled due to incorrect folding of the gamma chain. Gamma-delta TR is a heterodimer composed of a gamma and delta chain; disulfide-linked. The gamma-delta TR is associated with the transmembrane signaling CD3 coreceptor proteins following the stoichiometry: a single gamma-delta TR heterodimer associates with one CD3D-CD3E heterodimer, one CD3G-CD3E heterodimer and one CD247 homodimer forming a stable octameric structure. Upon activation, gamma-delta TR complex associates with FCER1G to initiate intracellular signaling.

The protein resides in the cell membrane. Functionally, probable non-functional open reading frame (ORF) of V region of the variable domain of T cell receptor (TR) gamma chain. Non-functional ORF generally cannot participate in the synthesis of a productive T cell receptor (TR) chain due to altered V-(D)-J or switch recombination and/or splicing site (at mRNA level) and/or conserved amino acid change (protein level). Gamma-delta TRs recognize a variety of self and foreign non-peptide antigens frequently expressed at the epithelial boundaries between the host and external environment, including endogenous lipids presented by MH-like protein CD1D and phosphoantigens presented by butyrophilin-like molecule BTN3A1. Upon antigen recognition induces rapid, innate-like immune responses involved in pathogen clearance and tissue repair. Binding of gamma-delta TR complex to antigen triggers phosphorylation of immunoreceptor tyrosine-based activation motifs (ITAMs) in the CD3 chains by the LCK and FYN kinases, allowing the recruitment, phosphorylation, and activation of ZAP70 that facilitates phosphorylation of the scaffolding proteins LCP2 and LAT. This lead to the formation of a supramolecular signalosome that recruits the phospholipase PLCG1, resulting in calcium mobilization and ERK activation, ultimately leading to T cell expansion and differentiation into effector cells. Gamma-delta TRs are produced through somatic rearrangement of a limited repertoire of variable (V), diversity (D), and joining (J) genes. The potential diversity of gamma-delta TRs is conferred by the unique ability to rearrange (D) genes in tandem and to utilize all three reading frames. The combinatorial diversity is considerably increased by the sequence exonuclease trimming and random nucleotide (N) region additions which occur during the V-(D)-J rearrangements. The protein is Probable non-functional T cell receptor gamma variable 11 of Homo sapiens (Human).